Here is a 348-residue protein sequence, read N- to C-terminus: MRKLAHNFYKPLAIGAPEPIRELPVRPERVVHFFPPHVEKIRARIPEVAKQVDVLCGNLEDAIPMDAKEAARNGFIEVVKATDFGDTALWVRVNALNSPWVLDDIAEIVAAVGNKLDVIMIPKVEGPWDIHFVDQYLALLEARHQIKKPILIHALLETAQGMVNLEEIAGASPRMHGFSLGPADLAASRGMKTTRVGGGHPFYGVLADPQEGQAERPFYQQDLWHYTIARMVDVAVAHGLRAFYGPFGDIKDEAACEAQFRNAFLLGCTGAWSLAPNQIPIAKRVFSPDVNEVLFAKRILEAMPDGSGVAMIDGKMQDDATWKQAKVIVDLARMIAKKDPDLAQAYGL.

Substrate contacts are provided by residues 32-33 (HF), lysine 40, and arginine 92. The Mg(2+) site is built by glutamate 157 and aspartate 184. Residues 183 to 184 (AD) and leucine 274 each bind substrate.

The protein belongs to the HpcH/HpaI aldolase family. Homohexamer. Dimer of trimers. The cofactor is Mg(2+). Requires Mn(2+) as cofactor.

The catalysed reaction is (S)-malyl-CoA = glyoxylate + acetyl-CoA. The enzyme catalyses (2R,3S)-beta-methylmalyl-CoA = propanoyl-CoA + glyoxylate. It carries out the reaction (3S)-citramalyl-CoA = pyruvate + acetyl-CoA. Inhibited by oxalate. Functionally, involved in the 3-hydroxypropionate cycle used for autotrophic carbon dioxide fixation, and in the glyoxylate assimilation cycle used to regenerate acetyl-CoA and produce pyruvate as universal precursor for biosynthesis. As a part of the 3-hydroxypropionate cycle, it catalyzes the cleavage of (S)-malyl-CoA to yield acetyl-CoA and glyoxylate. As part of the glyoxylate assimilation cycle, it catalyzes the condensation of glyoxylate with propionyl-CoA to yield (2R,3S)-beta-methylmalyl-CoA, and catalyzes the cleavage of (S)-citramalyl-CoA to yield acetyl-CoA and pyruvate. This chain is Malyl-CoA/beta-methylmalyl-CoA/citramalyl-CoA lyase (mcl), found in Chloroflexus aurantiacus.